Reading from the N-terminus, the 480-residue chain is NADH-quinone oxidoreductase subunit N (480 aa).

14 consecutive transmembrane segments (helical) span residues 11-31 (LLPELVATGFLLVVLLGGVFA), 38-58 (LVAALAGLGTLASFAAAAGLL), 76-96 (FALYFKLIITATAFFTVIAAA), 105-125 (APEYMTLIIAVALGGMLLVSM), 128-148 (LFGVFLAVELATIPSYAMVAF), 163-183 (LITGVIASSFLLYGIVLIYGV), 195-215 (AFGEGLSPVAIVGLVLMISGL), 240-260 (AAFLSVAPKAAIFAALLRILL), 270-290 (WTALMAVIAIVTMFVGNLLAL), 298-318 (MLAYSSVAHSGYILAAFAALQ), 329-349 (VMIYSAAYAVMNLGAFLTIDL), 368-388 (AAAMAVFMAALVGIPPLSGFF), 407-427 (VAVAALVVNSVLSVPYYFGII), and 453-473 (VYAMALLTALFFLGVGPLAAL).

Belongs to the complex I subunit 2 family. NDH-1 is composed of 14 different subunits. Subunits NuoA, H, J, K, L, M, N constitute the membrane sector of the complex.

The protein resides in the cell membrane. The catalysed reaction is a quinone + NADH + 5 H(+)(in) = a quinol + NAD(+) + 4 H(+)(out). NDH-1 shuttles electrons from NADH, via FMN and iron-sulfur (Fe-S) centers, to quinones in the respiratory chain. The immediate electron acceptor for the enzyme in this species is believed to be a menaquinone. Couples the redox reaction to proton translocation (for every two electrons transferred, four hydrogen ions are translocated across the cytoplasmic membrane), and thus conserves the redox energy in a proton gradient. This chain is NADH-quinone oxidoreductase subunit N, found in Rubrobacter xylanophilus (strain DSM 9941 / JCM 11954 / NBRC 16129 / PRD-1).